The primary structure comprises 59 residues: Large ribosomal subunit protein uL30 (59 aa).

The protein belongs to the universal ribosomal protein uL30 family. Part of the 50S ribosomal subunit.

The sequence is that of Large ribosomal subunit protein uL30 from Psychrobacter sp. (strain PRwf-1).